We begin with the raw amino-acid sequence, 106 residues long: Large ribosomal subunit protein uL30 (106 aa).

The protein belongs to the universal ribosomal protein uL30 family. As to quaternary structure, part of the 50S ribosomal subunit.

This Ruthia magnifica subsp. Calyptogena magnifica protein is Large ribosomal subunit protein uL30.